We begin with the raw amino-acid sequence, 288 residues long: Bis(5'-nucleosyl)-tetraphosphatase, symmetrical (288 aa).

The protein belongs to the Ap4A hydrolase family.

The catalysed reaction is P(1),P(4)-bis(5'-adenosyl) tetraphosphate + H2O = 2 ADP + 2 H(+). Its function is as follows. Hydrolyzes diadenosine 5',5'''-P1,P4-tetraphosphate to yield ADP. In Pseudomonas putida (strain ATCC 700007 / DSM 6899 / JCM 31910 / BCRC 17059 / LMG 24140 / F1), this protein is Bis(5'-nucleosyl)-tetraphosphatase, symmetrical.